The sequence spans 2443 residues: MAAEEGVASAASAGGSWGTAAMGRVLPMLLVPVPAEAMGQLGSRAQLRTQPEALGSLTAAGSLQVLSLTPGSRGGGRCCLEGPFWHFLWEDSRNSSTPTEKPKLLALGENYELLIYEFNLKDGRCDATILYSCSREALQKLIDDQDISISLLSLRILSFHNNTSLLFINKCVILHIIFPERDAAIRVLNCFTLPLPAQAVDMIIDTQLCRGILFVLSSLGWIYIFDVVDGTYVAHVDLALHKEDMCNEQQQEPAKISSFTSLKVSQDLDVAVIVSSSNSAVALNLNLYFRQHPGHLLCERILEDLPIQGPKGVDEDDPVNSAYNMKLAKFSFQIDRSWKAQLSSLNETIKNSKLEVSCCAPWFQDILHLESPESGNHSTSVQSWAFIPQDIMHGQYNVLQKDHAKTSDPGRSWKIMHISEQEEPIELKCVSVTGFTALFTWEVERMGYTITLWDLETQGMQCFSLGTKCIPVDSSGDQQLCFVLTENGLSLILFGLTQEEFLNRLMIHGSASTVDTLCHLNGWGRCSIPIHALEAGIENRQLDTVNFFLKSKENLFNPSSKSSVSDQFDHLSSHLYLRNVEELIPALDLLCSAIRESYSEPQSKHFSEQLLNLTLSFLNNQIKELFIHTEELDEHLQKGVNILTSYINELRTFMIKFPWKLTDAIDEYDVHENVPKVKESNIWKKLSFEEVIASAILNNKIPEAQTFFRIDSHSAQKLEELIGIGLNLVFDNLKKNNIKEASELLKNMGFDVKGQLLKICFYTTNKNIRDFLVEILKEKNYFSEKEKRTIDFVHQVEKLYLGHFQENMQIQSFPRYWIKEQDFFKHKSVLDSFLKYDCKDEFNKQDHRIVLNWALWWDQLTQESILLPRISPEEYKSYSPEALWRYLTARHDWLNIILWIGEFQTQHSYASLQQNKWPLLTVDVINQNTSCNNYMRNEILDKLARNGVFLASELEDFECFLLRLSRIGGVIQDTLPVQNYKTKEGWDFHSQFILYCLEHSLQHLLYVYLDCYKLSPENCPFLEKKELHEAHPWFEFLVQCRQVASNLTDPKLIFQASLANAQILIPTNQASVSSMLLEGHTLLALATTMYSPGGVSQVVQNEENENCLKKVDPQLLKMALTPYPKLKTALFPQCTPPSVLPSDITIYHLIQSLSPFDPSRLFGWQSANTLAIGDAWSHLPHFSSPDLVNKYAIVERLNFAYYLHNGRPSFAFGTFLVQELIKSKTPKQLIQQVGNEAYVIGLSSFHIPSIGAACVCFLELLGLDSLKLRVDMKVANIILSYKCRNEDAQYSFIRESVAEKLSKLADGEKTTTEELLVLLEEGTWNSIQQQEIKRLSSESSSQWALVVQFCRLHNMKLSISYLRECAKANDWLQFIIHSQLHNYHPAEVKSLIQYFSPVIQDHLRLAFENLPSVPTSKMDSDQVCNKCPQELQGSKQEMTDLFEILLQCSEEPDSWHWLLVEAVKQQAPILSVLASCLQGASAISCLCVWIITSVEDNVATEAMGHIQDSTEDHTWNLEDLSVIWRTLLTRQKSKTLIRGFQLFFKDSPLLLVMEMYELCMFFRNYKEAEAKLLEFQKSLETLNTAATKVHPVIPAMWLEDQVCFLLKLMLQQCKTQYELGKLLQLFVEREHLFSDGPDVKKLCILCQILKDTSIAINHTIITSYSIENLQHECRSILERLQTDGQFALARRVAELAELPVDNLVIKEITQEMQTLKHIEQWSLKQARIDFWKKCHENFKKNSISSKAASSFFSTQAHVACEHPTGWSSMEERHLLLTLAGHWLAQEDVVPLDKLEELEKQIWLCRITQHTLGRNQEETEPRFSRQISTSGELSFDSLASEFSFSKLAALNTSKYLELNSLPSKETCENRLDWKEQESLNFLIGRLLDDGCVHEASRVCRYFHFYNPDVALVLHCRALASGEASMEDLHPEIHALLQSAELLEEEAPDIPLRRVHSTSSLDSQKFVTVPSSNEVVTNLEVLTSKCLHGKNYCRQVLCLYDLAKELGCSYTDVAAQDGEAMLRKILASQQPDRCKRAQAFISTQGLKPDTVAELVAEEVTRELLTSSQGTGHKQMFNPTEESQTFLQLTTLCQDRTLVGMKLLDKISSVPHGELSCTTELLILAHHCFTLTCHMEGIIRVLQAAHMLTDNHLAPSEEYGLVVRLLTGIGRYNEMTYIFDLLHKKHYFEVLMRKKLDPSGTLKTALLDYIKRCRPGDSEKHNMIALCFSMCREIGENHEAAARIQLKLIESQPWEDSLKDGHQLKQLLLKALTLMLDAAESYAKDSCVRQAQHCQRLTKLITLQIHFLNTGQNTMLINLGRHKLMDCILALPRFYQASIVAEAYDFVPDWAEILYQQVILKGDFNYLEEFKQQRLLKSSIFEEISKKYKQHQPTDMVMENLKKLLTYCEDVYLYYKLAYEHKFYEIVNVLLKDPQTGCCLKDMLAG.

Phosphoserine is present on Ser-1955.

Interacts with AP5Z1, AP5B1, AP5S1 and ZFYVE26. As to expression, expressed in all structures of brain, with a high expression in cerebellum. Expressed in cortical projection neurons.

The protein localises to the cytoplasm. It localises to the cytosol. It is found in the nucleus. Its subcellular location is the cell projection. The protein resides in the axon. The protein localises to the dendrite. May play a role in neurite plasticity by maintaining cytoskeleton stability and regulating synaptic vesicle transport. In Homo sapiens (Human), this protein is Spatacsin (SPG11).